The sequence spans 288 residues: Adenylate kinase (288 aa).

An ATP-binding site is contributed by 65 to 70 (GVGKGT). The segment at 85-114 (ATGDLVRDELKSSGPLSKQLAEIVNQGKLV) is NMP. Residues threonine 86, arginine 91, 112–114 (KLV), 142–145 (GFPR), and glutamine 149 contribute to the AMP site. The interval 178–226 (GRRICSECGKNFNVASIDVAGENGAPRISMARLNPPFTVCFKLITRADD) is LID. Arginine 179 is a binding site for ATP. Residues arginine 223 and arginine 234 each contribute to the AMP site. Glycine 262 serves as a coordination point for ATP.

The protein belongs to the adenylate kinase family. Monomer.

It localises to the cytoplasm. It carries out the reaction AMP + ATP = 2 ADP. Catalyzes the reversible transfer of the terminal phosphate group between ATP and AMP. Plays an important role in cellular energy homeostasis and in adenine nucleotide metabolism. The protein is Adenylate kinase (ADK) of Solanum tuberosum (Potato).